A 417-amino-acid chain; its full sequence is Gamma-glutamyl phosphate reductase (417 aa).

It belongs to the gamma-glutamyl phosphate reductase family.

It is found in the cytoplasm. The catalysed reaction is L-glutamate 5-semialdehyde + phosphate + NADP(+) = L-glutamyl 5-phosphate + NADPH + H(+). Its pathway is amino-acid biosynthesis; L-proline biosynthesis; L-glutamate 5-semialdehyde from L-glutamate: step 2/2. Its function is as follows. Catalyzes the NADPH-dependent reduction of L-glutamate 5-phosphate into L-glutamate 5-semialdehyde and phosphate. The product spontaneously undergoes cyclization to form 1-pyrroline-5-carboxylate. The sequence is that of Gamma-glutamyl phosphate reductase from Serratia marcescens.